Reading from the N-terminus, the 573-residue chain is PCNA-interacting partner (573 aa).

Residues 463 to 511 (VSEGAQPSVGKARLETSSENVHVDRSKDDKGPRKSTKRKLAKSKQPGVR) form a disordered region. Over residues 474–494 (ARLETSSENVHVDRSKDDKGP) the composition is skewed to basic and acidic residues. Residues 495–504 (RKSTKRKLAK) are compositionally biased toward basic residues.

This sequence belongs to the PARI family. In terms of assembly, interacts with RAD51 and PCNA. Interacts with PARP1. Interacts with TASOR. Present in testis (at protein level). Expressed in testis, gastrointestinal tract (jejunum, ileum, and colon) and immune system (thymus and spleen). Weakly expressed in lung, kidney, pituitary gland and muscle.

The protein localises to the cytoplasm. It localises to the nucleus. Required to suppress inappropriate homologous recombination, thereby playing a central role DNA repair and in the maintenance of genomic stability. Antagonizes homologous recombination by interfering with the formation of the RAD51-DNA homologous recombination structure. Positively regulate the poly(ADP-ribosyl)ation activity of PARP1; however such function may be indirect. Binds single-strand DNA and poly(A) homopolymers. The chain is PCNA-interacting partner (Parpbp) from Rattus norvegicus (Rat).